A 104-amino-acid polypeptide reads, in one-letter code: Protein E7 (104 aa).

Residues M1–N47 are E7 terminal domain. The LXCXE motif; interaction with host RB1 and TMEM173/STING motif lies at L23–E27. A zinc finger spans residues C65–C101. The Nuclear export signal motif lies at V83 to M91.

The protein belongs to the papillomaviridae E7 protein family. In terms of assembly, homodimer. Homooligomer. Interacts with host RB1; this interaction induces dissociation of RB1-E2F1 complex thereby disrupting RB1 activity. Interacts with host EP300; this interaction represses EP300 transcriptional activity. Interacts with protein E2; this interaction inhibits E7 oncogenic activity. Interacts with host TMEM173/STING; this interaction impairs the ability of TMEM173/STING to sense cytosolic DNA and promote the production of type I interferon (IFN-alpha and IFN-beta). Highly phosphorylated.

The protein resides in the host cytoplasm. It is found in the host nucleus. Its function is as follows. Plays a role in viral genome replication by driving entry of quiescent cells into the cell cycle. Stimulation of progression from G1 to S phase allows the virus to efficiently use the cellular DNA replicating machinery to achieve viral genome replication. E7 protein has both transforming and trans-activating activities. Induces the disassembly of the E2F1 transcription factor from RB1, with subsequent transcriptional activation of E2F1-regulated S-phase genes. Interferes with host histone deacetylation mediated by HDAC1 and HDAC2, leading to transcription activation. Also plays a role in the inhibition of both antiviral and antiproliferative functions of host interferon alpha. Interaction with host TMEM173/STING impairs the ability of TMEM173/STING to sense cytosolic DNA and promote the production of type I interferon (IFN-alpha and IFN-beta). The chain is Protein E7 from Homo sapiens (Human).